The chain runs to 375 residues: uncharacterized protein (375 aa).

This sequence belongs to the mimivirus L17x/L18x family.

This is an uncharacterized protein from Acanthamoeba polyphaga (Amoeba).